The primary structure comprises 462 residues: Hydroxymethylglutaryl-CoA synthase (462 aa).

The active-site Proton donor/acceptor is glutamate 86. Catalysis depends on cysteine 120, which acts as the Acyl-thioester intermediate. 6 residues coordinate (3S)-3-hydroxy-3-methylglutaryl-CoA: cysteine 120, threonine 211, histidine 261, lysine 270, asparagine 338, and serine 372. Histidine 261 functions as the Proton donor/acceptor in the catalytic mechanism.

This sequence belongs to the thiolase-like superfamily. HMG-CoA synthase family.

It catalyses the reaction acetoacetyl-CoA + acetyl-CoA + H2O = (3S)-3-hydroxy-3-methylglutaryl-CoA + CoA + H(+). It functions in the pathway siderophore biosynthesis. In terms of biological role, hydroxymethylglutaryl-CoA synthase involved in the biosynthesis of siderophore ferrichrome A which is contributing to organismal virulence. The first step of ferrichrome A biosynthesis is performed by the HMG-CoA synthase hcs1 which catalyzes the generation of HMG-CoA and CoA using acetoacetyl-CoA and acetyl-CoA as substrates. The enoyl-CoA isomerase/hydratase fer4 then catalyzes the conversion of hcs1-produced HMG-CoA to methylglutaconyl-CoA. The acyltransferase fer5 then fuses the fer4-generated methylglutaconyl-CoA with sid1-generated hydroxyornithine to yield methylglutaconyl hydroxyornithine. Methylglutaconyl hydroxyornithine is then available for use by the NRPS fer3 to generate ferrichrome A. The chain is Hydroxymethylglutaryl-CoA synthase from Mycosarcoma maydis (Corn smut fungus).